A 339-amino-acid chain; its full sequence is RNA 3'-terminal phosphate cyclase (339 aa).

Residues Gln103 and 283–287 (HLADQ) each bind ATP. His308 acts as the Tele-AMP-histidine intermediate in catalysis.

It belongs to the RNA 3'-terminal cyclase family. Type 1 subfamily.

The protein resides in the cytoplasm. It catalyses the reaction a 3'-end 3'-phospho-ribonucleotide-RNA + ATP = a 3'-end 2',3'-cyclophospho-ribonucleotide-RNA + AMP + diphosphate. Its function is as follows. Catalyzes the conversion of 3'-phosphate to a 2',3'-cyclic phosphodiester at the end of RNA. The mechanism of action of the enzyme occurs in 3 steps: (A) adenylation of the enzyme by ATP; (B) transfer of adenylate to an RNA-N3'P to produce RNA-N3'PP5'A; (C) and attack of the adjacent 2'-hydroxyl on the 3'-phosphorus in the diester linkage to produce the cyclic end product. The biological role of this enzyme is unknown but it is likely to function in some aspects of cellular RNA processing. In Salmonella typhimurium (strain LT2 / SGSC1412 / ATCC 700720), this protein is RNA 3'-terminal phosphate cyclase.